Reading from the N-terminus, the 1382-residue chain is Ninein-like protein (1382 aa).

2 EF-hand domains span residues 7–42 (HYVS…LHLE) and 41–76 (LEQQ…VLSS). Residues 144–164 (ASLESVESPKSDEEAESTKEA) form a disordered region. Ser148 is subject to Phosphoserine. Positions 150–164 (ESPKSDEEAESTKEA) are enriched in basic and acidic residues. 2 consecutive EF-hand domains span residues 196-231 (TPES…VGLQ) and 233-268 (LEKE…HEPA). Ca(2+) contacts are provided by Asp246, Asp248, Asp250, Lys252, and Glu257. 3 coiled-coil regions span residues 384-424 (QELS…MDDC), 484-579 (AGLR…WARL), and 616-699 (IETE…QLQD). The KEN box motif lies at 495-497 (KEN). A D-box motif is present at residues 633–641 (RTQLETKVN). 2 disordered regions span residues 857–969 (PLAW…ASCR) and 982–1006 (RARS…GALE). Low complexity predominate over residues 991 to 1004 (QEQASEQQARAEGA). Positions 1046-1375 (ETKIALEREK…RALNKLVSRI (330 aa)) form a coiled coil.

As to quaternary structure, interacts with gamma-tubulin and TUBGCP4. Interacts with anaphase promoting complex/cyclosome (APC/C). Interacts with CDC20 and FZR1. Isoform 2 interacts with LCA5 and USH2A. Isoform 2 interacts with DZANK1. In terms of processing, phosphorylated by PLK1 which disrupts its centrosome association and interaction with gamma-tubulin. Ubiquitinated by the APC/C complex leading to its degradation. Expressed in KYSE-150 esophageal carcinoma, HeLa cervical carcinoma and U2OS osteosarcoma cells. Expression is regulated in a cell cycle-dependent manner and peaks during G2/M phase (at protein level). Expressed in fetal heart, skeletal muscle, liver, lung and cochlea, and in adult brain, testis, kidney and retina.

It is found in the cytoplasm. The protein resides in the cytoskeleton. The protein localises to the microtubule organizing center. It localises to the centrosome. Involved in the microtubule organization in interphase cells. Overexpression induces the fragmentation of the Golgi, and causes lysosomes to disperse toward the cell periphery; it also interferes with mitotic spindle assembly. Involved in vesicle transport in photoreceptor cells. May play a role in ovarian carcinogenesis. The polypeptide is Ninein-like protein (NINL) (Homo sapiens (Human)).